Here is a 290-residue protein sequence, read N- to C-terminus: 2-hydroxy-6-oxo-6-(2'-aminophenyl)hexa-2,4-dienoic acid hydrolase (290 aa).

Active-site residues include serine 114, aspartate 233, and histidine 261.

The protein belongs to the DmpD/TodF/XylF esterase family. As to quaternary structure, homodimer.

It catalyses the reaction (2E,4E)-6-(2-aminophenyl)-2-hydroxy-6-oxohexa-2,4-dienoate + H2O = (2E)-2-hydroxypenta-2,4-dienoate + anthranilate + H(+). The protein operates within xenobiotic degradation; carbazole degradation. Involved in the degradation of carbazole, a toxic N-heterocyclic aromatic compound containing dibenzopyrrole system. Catalyzes the hydrolytic cleavage of a carbon-carbon bond of 2-hydroxy-6-oxo-6-(2'-aminophenyl)hexa-2,4-dienoic acid (HOPDA) to yield anthranilate. CarC is specific for 2-hydroxy-6-oxo-6-phenylhexa-2,4-dienoic acid (6-phenyl-HODA), and has little activity toward 2-hydroxy-6-oxohepta-2,4-dienoic acid and 2-hydroxymuconic semialdehyde. The effect of the presence of an amino group or hydroxyl group at the 2'-position of phenyl moiety of 6-phenyl-HODA on the enzyme activity is found to be small. The protein is 2-hydroxy-6-oxo-6-(2'-aminophenyl)hexa-2,4-dienoic acid hydrolase (carC) of Metapseudomonas resinovorans (Pseudomonas resinovorans).